The primary structure comprises 484 residues: tRNA sulfurtransferase (484 aa).

In terms of domain architecture, THUMP spans 63–167 (REMIERLTCT…DQRLYVIHNQ (105 aa)). ATP is bound by residues 185–186 (LM), K267, G289, and Q298. A disulfide bridge links C346 with C457. Residues 405 to 483 (ALPGQIVIDI…GHANVRVYRP (79 aa)) form the Rhodanese domain. The active-site Cysteine persulfide intermediate is C457.

The protein belongs to the ThiI family.

It is found in the cytoplasm. It carries out the reaction [ThiI sulfur-carrier protein]-S-sulfanyl-L-cysteine + a uridine in tRNA + 2 reduced [2Fe-2S]-[ferredoxin] + ATP + H(+) = [ThiI sulfur-carrier protein]-L-cysteine + a 4-thiouridine in tRNA + 2 oxidized [2Fe-2S]-[ferredoxin] + AMP + diphosphate. The catalysed reaction is [ThiS sulfur-carrier protein]-C-terminal Gly-Gly-AMP + S-sulfanyl-L-cysteinyl-[cysteine desulfurase] + AH2 = [ThiS sulfur-carrier protein]-C-terminal-Gly-aminoethanethioate + L-cysteinyl-[cysteine desulfurase] + A + AMP + 2 H(+). The protein operates within cofactor biosynthesis; thiamine diphosphate biosynthesis. In terms of biological role, catalyzes the ATP-dependent transfer of a sulfur to tRNA to produce 4-thiouridine in position 8 of tRNAs, which functions as a near-UV photosensor. Also catalyzes the transfer of sulfur to the sulfur carrier protein ThiS, forming ThiS-thiocarboxylate. This is a step in the synthesis of thiazole, in the thiamine biosynthesis pathway. The sulfur is donated as persulfide by IscS. This Pseudomonas putida (strain ATCC 47054 / DSM 6125 / CFBP 8728 / NCIMB 11950 / KT2440) protein is tRNA sulfurtransferase.